The sequence spans 96 residues: Probable quinol oxidase subunit 4 (96 aa).

3 helical membrane-spanning segments follow: residues 8-28, 36-56, and 68-88; these read TVGF…TLYT, VTII…MFMH, and FKVI…YWVM.

It belongs to the cytochrome c oxidase bacterial subunit 4 family.

The protein resides in the cell membrane. It carries out the reaction 2 a quinol + O2 = 2 a quinone + 2 H2O. Catalyzes quinol oxidation with the concomitant reduction of oxygen to water. The sequence is that of Probable quinol oxidase subunit 4 (qoxD) from Staphylococcus epidermidis (strain ATCC 35984 / DSM 28319 / BCRC 17069 / CCUG 31568 / BM 3577 / RP62A).